The chain runs to 428 residues: Dihydroorotase (428 aa).

Positions 59 and 61 each coordinate Zn(2+). Residues His61 to Arg63 and Asn93 each bind substrate. Residues Asp151, His178, and His231 each coordinate Zn(2+). Asn277 contacts substrate. Zn(2+) is bound at residue Asp304. Residue Asp304 is part of the active site. Substrate-binding positions include His308 and Phe322 to Gly323.

Belongs to the metallo-dependent hydrolases superfamily. DHOase family. Class I DHOase subfamily. Zn(2+) is required as a cofactor.

The catalysed reaction is (S)-dihydroorotate + H2O = N-carbamoyl-L-aspartate + H(+). It participates in pyrimidine metabolism; UMP biosynthesis via de novo pathway; (S)-dihydroorotate from bicarbonate: step 3/3. Its function is as follows. Catalyzes the reversible cyclization of carbamoyl aspartate to dihydroorotate. The protein is Dihydroorotase of Bacillus cereus (strain B4264).